The sequence spans 465 residues: Neuromedin-K receptor (465 aa).

The Extracellular segment spans residues 1–84; that stretch reads MATLPAAETW…TNQFVQPSWR (84 aa). N-linked (GlcNAc...) asparagine glycosylation is found at asparagine 23, asparagine 50, and asparagine 73. Residues 85–107 form a helical membrane-spanning segment; sequence IALWSLAYGVVVAVAVLGNLIVI. Residues 108-117 lie on the Cytoplasmic side of the membrane; the sequence is WIILAHKRMR. A helical membrane pass occupies residues 118–139; the sequence is TVTNYFLVNLAFSDASMAAFNT. Topologically, residues 140–159 are extracellular; sequence LVNFIYALHSEWYFGANYCR. Residues cysteine 158 and cysteine 233 are joined by a disulfide bond. The helical transmembrane segment at 160 to 181 threads the bilayer; that stretch reads FQNFFPITAVFASIYSMTAIAV. Topologically, residues 182-201 are cytoplasmic; it reads DRYMAIIDPLKPRLSATATK. Residues 202-222 traverse the membrane as a helical segment; that stretch reads IVIGSIWILAFLLAFPQCLYS. Residues 223-245 lie on the Extracellular side of the membrane; it reads KTKVMPGRTLCFVQWPEGPKQHF. The helical transmembrane segment at 246-270 threads the bilayer; that stretch reads TYHIIVIILVYCFPLLIMGITYTIV. Residues 271 to 299 lie on the Cytoplasmic side of the membrane; sequence GITLWGGEIPGDTCDKYHEQLKAKRKVVK. Residues 300 to 321 traverse the membrane as a helical segment; the sequence is MMIIVVMTFAICWLPYHIYFIL. Residues 322–334 are Extracellular-facing; sequence TAIYQQLNRWKYI. Residues 335-359 form a helical membrane-spanning segment; that stretch reads QQVYLASFWLAMSSTMYNPIIYCCL. The Cytoplasmic portion of the chain corresponds to 360–465; that stretch reads NKRFRAGFKR…SPYTSVDEYS (106 aa). Cysteine 374 is lipidated: S-palmitoyl cysteine. Residues 415–465 are disordered; it reads PNDADTTRSSRKKRATPRDPSFNGCSRRNSKSASATSSFISSPYTSVDEYS. A compositionally biased stretch (low complexity) spans 445-465; that stretch reads KSASATSSFISSPYTSVDEYS.

This sequence belongs to the G-protein coupled receptor 1 family. In terms of processing, the anchoring of this receptor to the plasma membrane is probably mediated by the palmitoylation of a cysteine residue.

The protein resides in the cell membrane. In terms of biological role, this is a receptor for the tachykinin neuropeptide neuromedin-K (neurokinin B). It is associated with G proteins that activate a phosphatidylinositol-calcium second messenger system. The rank order of affinity of this receptor to tachykinins is: neuromedin-K &gt; substance K &gt; substance P. In Homo sapiens (Human), this protein is Neuromedin-K receptor (TACR3).